Reading from the N-terminus, the 559-residue chain is Sesquiterpene synthase TPS3 (559 aa).

Residues arginine 275, aspartate 312, aspartate 316, arginine 453, and aspartate 456 each coordinate (2E,6E)-farnesyl diphosphate. Mg(2+) contacts are provided by aspartate 312 and aspartate 316. The DDXXD motif motif lies at 312-316; the sequence is DDTYD. Positions 456, 460, and 464 each coordinate Mg(2+).

It belongs to the terpene synthase family. Tpsa subfamily. Monomer. It depends on Mg(2+) as a cofactor. Highly expressed in glandular trichomes. Expressed in roots and leaves.

The protein resides in the cytoplasm. The catalysed reaction is (2E,6E)-farnesyl diphosphate = (+)-(R)-germacrene A + diphosphate. Its pathway is secondary metabolite biosynthesis; terpenoid biosynthesis. Functionally, sesquiterpene synthase involved in the biosynthesis of volatile compounds. Mediates the conversion of (2E,6E)-farnesyl diphosphate (FPP) into (+)-(R)-germacrene A. The chain is Sesquiterpene synthase TPS3 from Xanthium strumarium (Rough cocklebur).